The chain runs to 406 residues: MKNEVKKVVLAYSGGLDTSIILKWLQDEYNCEVVTFTADIGQGEELEPARKKALSLGIKEENIFIKDLRDEFVKDYVFPMFRANAIYEGEYLLGTSIARPLIAKTQAQIALQTGADAVSHGATGKGNDQVRFELGYLAFNPDLKIIAPWREWDLNSREKLLAYAQKHGIDISKKKGKSPYSMDANLLHISYEGLVLEDPAHAPEEDMWRWSKSPKDAPNESEIIELDFQKGDLVAINGEKLSPAGLLTKLNELGCKHGIGRLDIVENRYVGMKSRGCYETPGGTILLKAHRALESITLDREAAHLKDELMPKYASLIYNGYWFSPERMMLQALIDESQIHANGRVKLELYKGNVMIIGRESANDSLFNAAYCTFEEDEVYNQKDAAGFIKLNALRFIIAGKNGRKF.

ATP contacts are provided by residues 11–19 and A38; that span reads AYSGGLDTS. Y91 and S96 together coordinate L-citrulline. Residue G121 participates in ATP binding. L-aspartate-binding residues include T123, N127, and D128. N127 provides a ligand contact to L-citrulline. The L-citrulline site is built by R131, S181, S190, E266, and Y278.

The protein belongs to the argininosuccinate synthase family. Type 1 subfamily. As to quaternary structure, homotetramer.

The protein resides in the cytoplasm. The enzyme catalyses L-citrulline + L-aspartate + ATP = 2-(N(omega)-L-arginino)succinate + AMP + diphosphate + H(+). It participates in amino-acid biosynthesis; L-arginine biosynthesis; L-arginine from L-ornithine and carbamoyl phosphate: step 2/3. The sequence is that of Argininosuccinate synthase from Campylobacter jejuni subsp. jejuni serotype O:6 (strain 81116 / NCTC 11828).